The chain runs to 530 residues: uncharacterized protein (530 aa).

Polar residues-rich tracts occupy residues 60–74 and 92–103; these read LNESSLRSQQESSTP and GQGTSRPLPTLS. 2 disordered regions span residues 60–103 and 121–155; these read LNES…PTLS and ASSTNEPQELPDPRDAPREGSFRLDGNQSEFGLGN. Basic and acidic residues predominate over residues 131–142; that stretch reads PDPRDAPREGSF.

This is an uncharacterized protein from Mus musculus (Mouse).